A 470-amino-acid chain; its full sequence is UDP-N-acetylmuramate--L-alanine ligase (470 aa).

Residue 118–124 (GTHGKTT) coordinates ATP.

The protein belongs to the MurCDEF family.

Its subcellular location is the cytoplasm. It carries out the reaction UDP-N-acetyl-alpha-D-muramate + L-alanine + ATP = UDP-N-acetyl-alpha-D-muramoyl-L-alanine + ADP + phosphate + H(+). The protein operates within cell wall biogenesis; peptidoglycan biosynthesis. Its function is as follows. Cell wall formation. This Cereibacter sphaeroides (strain ATCC 17025 / ATH 2.4.3) (Rhodobacter sphaeroides) protein is UDP-N-acetylmuramate--L-alanine ligase.